The primary structure comprises 1157 residues: Zinc finger protein 516 (1157 aa).

The span at 1-13 (MDRSREAEMELRR) shows a compositional bias: basic and acidic residues. Residues 1–26 (MDRSREAEMELRRGPSPPRAGRSHEV) form a disordered region. Residues 1–420 (MDRSREAEME…ATRGKVAEPA (420 aa)) are mediates promoter DNA-binding and activation of transcription. 7 consecutive C2H2-type zinc fingers follow at residues 34-56 (HSCCICGKSFPFQSSLSQHMRKH), 62-84 (YKCPYCDHRASQKGNLKIHIRSH), 162-185 (VPCSFCKSRFERKKDLELHVHQAH), 188-211 (FKCRLCSYVTLREESLLSHIERDH), 236-258 (FPCEVCGQAFSQTWFLKAHMKKH), 264-286 (HGCHICGRRFKEPWFLKNHMKAH), and 323-345 (EVCTKCGNLFTNLDSLNAHNAIH). Over residues 449–458 (SQEKRKREQD) the composition is skewed to basic and acidic residues. Disordered regions lie at residues 449–503 (SQEK…QGKS) and 523–653 (SRVH…KGPE). A compositionally biased stretch (polar residues) spans 494–503 (ASATTGQGKS). The C2H2-type 8 zinc-finger motif lies at 504 to 526 (SECFECGKIFRTYHQMVLHSRVH). The segment covering 531–541 (RDRDPEGDRAA) has biased composition (basic and acidic residues). Polar residues predominate over residues 550 to 561 (EGDSASQPSSPG). Acidic residues predominate over residues 575–585 (EVVDDSGEEAV). A compositionally biased stretch (polar residues) spans 601–612 (GEVTPTALSNGD). Lys-630 participates in a covalent cross-link: Glycyl lysine isopeptide (Lys-Gly) (interchain with G-Cter in SUMO2). Basic and acidic residues predominate over residues 644 to 653 (SSRETTKGPE). Lys-669 is covalently cross-linked (Glycyl lysine isopeptide (Lys-Gly) (interchain with G-Cter in SUMO2)). The C2H2-type 9; atypical zinc-finger motif lies at 753–776 (HPCPYCTHKTYYPEVLWMHKRIWH). Disordered regions lie at residues 831–996 (TQVP…EPSV) and 1013–1040 (RGEAALQAPPGAPPTLNSAKQEPAAEGQ). The segment covering 914–928 (GSGSLSRSTTPTPSV) has biased composition (polar residues). Residues Lys-1032 and Lys-1051 each participate in a glycyl lysine isopeptide (Lys-Gly) (interchain with G-Cter in SUMO2) cross-link. The C2H2-type 10 zinc finger occupies 1092-1114 (FVCVECGKSFHQPSQLRAHLRAH). The tract at residues 1123–1157 (PRDSEVHTASTDAPKQGRDHTTPGTVPAGPLRKGI) is disordered.

It belongs to the krueppel C2H2-type zinc-finger protein family. In terms of assembly, interacts with PRDM16; the interaction is direct and may play a role in the transcription of brown adipose tissue-specific genes. Interacts with PWWP2B. Interacts with HDAC1; this interaction is enhanced in the presence of PWWP2B. In terms of tissue distribution, expressed by adipocytes more specifically in brown adipose tissue compared to white adipose tissue (WAT).

Its subcellular location is the nucleus. Its function is as follows. Transcriptional regulator that binds to the promoter and activates the transcription of genes promoting brown adipose tissue (BAT) differentiation. Among brown adipose tissue-specific genes, binds the proximal region of the promoter of the UCP1 gene to activate its transcription and thereby regulate thermogenesis. May also play a role in the cellular response to replication stress. The protein is Zinc finger protein 516 of Mus musculus (Mouse).